An 84-amino-acid chain; its full sequence is Large ribosomal subunit protein bL27 (84 aa).

A disordered region spans residues 1–21; the sequence is MATKKAGGSSRNGRDSAGRRL.

Belongs to the bacterial ribosomal protein bL27 family.

This chain is Large ribosomal subunit protein bL27, found in Pelagibacter ubique (strain HTCC1062).